The following is a 176-amino-acid chain: Pectinesterase inhibitor 1 (176 aa).

Positions 1–25 are cleaved as a signal peptide; sequence MAANLRNNAFLSSLMFLLLIGSSYA. Intrachain disulfides connect Cys-35-Cys-44 and Cys-98-Cys-138. Residue Asn-154 is glycosylated (N-linked (GlcNAc...) asparagine).

The protein belongs to the PMEI family. In terms of assembly, monomer and homodimer. Interacts in vitro with PPME1. In terms of tissue distribution, highest expression in flowers. Expressed exclusively at the pollen tube tip.

The protein resides in the secreted. It is found in the extracellular space. The protein localises to the apoplast. In terms of biological role, inhibits pectin methylesterase (PME) from flowers and siliques. Inhibits PME from leaves. The polypeptide is Pectinesterase inhibitor 1 (Arabidopsis thaliana (Mouse-ear cress)).